We begin with the raw amino-acid sequence, 133 residues long: Ycf54-like protein (133 aa).

It belongs to the ycf54 family.

The polypeptide is Ycf54-like protein (Synechocystis sp. (strain ATCC 27184 / PCC 6803 / Kazusa)).